The chain runs to 245 residues: Phycocyanobilin:ferredoxin oxidoreductase (245 aa).

Belongs to the HY2 family.

It catalyses the reaction (2R,3Z)-phycocyanobilin + 4 oxidized [2Fe-2S]-[ferredoxin] = biliverdin IXalpha + 4 reduced [2Fe-2S]-[ferredoxin] + 4 H(+). Functionally, catalyzes the four-electron reduction of biliverdin IX-alpha (2-electron reduction at both the A and D rings); the reaction proceeds via an isolatable 2-electron intermediate, 181,182-dihydrobiliverdin. Upon overexpression in E.coli with PCB:ferredoxin oxidoreductase, CpeS and either CpcB or PecB permits synthesis of phycocyanin-coupled CpcB or PecB. This Nostoc sp. (strain PCC 7120 / SAG 25.82 / UTEX 2576) protein is Phycocyanobilin:ferredoxin oxidoreductase (pcyA).